The following is a 633-amino-acid chain: Membrane protein insertase YidC (633 aa).

6 consecutive transmembrane segments (helical) span residues K3 to N23, F377 to F397, L453 to I473, I499 to I519, G541 to A561, and S562 to F582. Residues L612–R633 are disordered.

Belongs to the OXA1/ALB3/YidC family. Type 1 subfamily. Interacts with the Sec translocase complex via SecD. Specifically interacts with transmembrane segments of nascent integral membrane proteins during membrane integration.

Its subcellular location is the cell inner membrane. Functionally, required for the insertion and/or proper folding and/or complex formation of integral membrane proteins into the membrane. Involved in integration of membrane proteins that insert both dependently and independently of the Sec translocase complex, as well as at least some lipoproteins. Aids folding of multispanning membrane proteins. In Parabacteroides distasonis (strain ATCC 8503 / DSM 20701 / CIP 104284 / JCM 5825 / NCTC 11152), this protein is Membrane protein insertase YidC.